The following is a 258-amino-acid chain: Polysialic acid transport protein KpsM (258 aa).

Topologically, residues Met1–Leu30 are cytoplasmic. Positions Leu30–Arg251 constitute an ABC transmembrane type-2 domain. A helical transmembrane segment spans residues Gly31–Met54. Over His55 to Ile61 the chain is Periplasmic. Residues Ser62–Ser81 traverse the membrane as a helical segment. The Cytoplasmic portion of the chain corresponds to Lys82 to Ala108. A helical membrane pass occupies residues Arg109–Gly132. Topologically, residues Glu133–Leu143 are periplasmic. A helical transmembrane segment spans residues Val144–Gly165. Residues Lys166–Val174 are Cytoplasmic-facing. Residues Leu175 to Ile195 traverse the membrane as a helical segment. Over Pro196–Glu226 the chain is Periplasmic. A helical membrane pass occupies residues Gly227–Leu247. At Tyr248–Ser258 the chain is on the cytoplasmic side.

Belongs to the ABC-2 integral membrane protein family.

The protein resides in the cell inner membrane. In terms of biological role, kpsM and KpsT constitute a system for the transport of polysialic acid across the cytoplasmic membrane. The chain is Polysialic acid transport protein KpsM (kpsM) from Escherichia coli.